A 348-amino-acid chain; its full sequence is Uroporphyrinogen decarboxylase (348 aa).

Substrate is bound by residues 24-28, Asp-73, Tyr-150, Ser-205, and His-324; that span reads RQAGR.

The protein belongs to the uroporphyrinogen decarboxylase family. As to quaternary structure, homodimer.

The protein resides in the cytoplasm. The enzyme catalyses uroporphyrinogen III + 4 H(+) = coproporphyrinogen III + 4 CO2. Its pathway is porphyrin-containing compound metabolism; protoporphyrin-IX biosynthesis; coproporphyrinogen-III from 5-aminolevulinate: step 4/4. Catalyzes the decarboxylation of four acetate groups of uroporphyrinogen-III to yield coproporphyrinogen-III. This chain is Uroporphyrinogen decarboxylase, found in Roseiflexus sp. (strain RS-1).